Here is a 201-residue protein sequence, read N- to C-terminus: Recombination protein RecR (201 aa).

Residues 60 to 75 (CSRCGNVDTVDPCTVC) form a C4-type zinc finger. A Toprim domain is found at 83–178 (SVIIVVEDVS…KITRLAHGVP (96 aa)).

It belongs to the RecR family.

In terms of biological role, may play a role in DNA repair. It seems to be involved in an RecBC-independent recombinational process of DNA repair. It may act with RecF and RecO. In Rhizobium etli (strain ATCC 51251 / DSM 11541 / JCM 21823 / NBRC 15573 / CFN 42), this protein is Recombination protein RecR.